A 127-amino-acid polypeptide reads, in one-letter code: uncharacterized protein (127 aa).

The chain crosses the membrane as a helical span at residues 12–32 (FFFLILFYFCIISSFLFLFIF).

The protein resides in the membrane. This is an uncharacterized protein from Saccharomyces cerevisiae (strain ATCC 204508 / S288c) (Baker's yeast).